An 830-amino-acid polypeptide reads, in one-letter code: Septin and tuftelin-interacting protein 1 homolog (830 aa).

The span at 1 to 17 shows a compositional bias: acidic residues; sequence MEDDDGRESFEINDMDL. 2 disordered regions span residues 1–122 and 196–244; these read MEDD…PKQN and AYGK…KGSW. The region spanning 153–199 is the G-patch domain; that stretch reads NSNKIMKMMQAMGYKPGEGLGAQGQGIVEPVQAQLRKGRGAVGAYGK.

Belongs to the TFP11/STIP family. In terms of assembly, identified in the spliceosome C complex. Can assemble into large rod-like polymers. Detected in muscle cells from body, pharynx and vulva, in neurons from head and tail, in pharyngeal gland and in tail hypodermal cells.

The protein resides in the nucleus. May be involved in pre-mRNA splicing. Required for embryonic development and survival. This is Septin and tuftelin-interacting protein 1 homolog (stip-1) from Caenorhabditis elegans.